We begin with the raw amino-acid sequence, 152 residues long: Large ribosomal subunit protein uL15 (152 aa).

This sequence belongs to the universal ribosomal protein uL15 family. Part of the 50S ribosomal subunit.

In terms of biological role, binds to the 23S rRNA. This Staphylothermus marinus (strain ATCC 43588 / DSM 3639 / JCM 9404 / F1) protein is Large ribosomal subunit protein uL15.